The primary structure comprises 347 residues: 4-hydroxy-2-oxovalerate aldolase 1 (347 aa).

The 254-residue stretch at 8-261 (VTLYDMSLLX…ETGIDLYKIM (254 aa)) folds into the Pyruvate carboxyltransferase domain. His-20 serves as the catalytic Proton acceptor. 2 residues coordinate substrate: Ser-171 and His-200. Residues His-200 and His-202 each contribute to the Mn(2+) site. Tyr-291 contributes to the substrate binding site.

This sequence belongs to the 4-hydroxy-2-oxovalerate aldolase family.

The enzyme catalyses (S)-4-hydroxy-2-oxopentanoate = acetaldehyde + pyruvate. This is 4-hydroxy-2-oxovalerate aldolase 1 (salH) from Metapseudomonas furukawaii (Pseudomonas furukawaii).